The sequence spans 144 residues: MLLPKRVKYRRQHRPKTTGRSKGGNYVTFGEFGLQATTTSWITSRQIESARIAMTRYMKRGGKVWIKIFPHTPYTKKPLEVRMGAGKGAVEGWIAVVKPGRILFEVAGVSEEVAREALRLASHKLPVKTKFVKREELGGETNES.

The span at 1-19 (MLLPKRVKYRRQHRPKTTG) shows a compositional bias: basic residues. Residues 1 to 23 (MLLPKRVKYRRQHRPKTTGRSKG) form a disordered region.

The protein belongs to the universal ribosomal protein uL16 family. As to quaternary structure, part of the 50S ribosomal subunit.

Its function is as follows. Binds 23S rRNA and is also seen to make contacts with the A and possibly P site tRNAs. The sequence is that of Large ribosomal subunit protein uL16 from Staphylococcus aureus (strain Mu50 / ATCC 700699).